The following is a 242-amino-acid chain: Biosynthetic peptidoglycan transglycosylase (242 aa).

A helical transmembrane segment spans residues 19–39 (ILAALAVFWGGGIALFSVVPV).

The protein belongs to the glycosyltransferase 51 family.

It is found in the cell inner membrane. The catalysed reaction is [GlcNAc-(1-&gt;4)-Mur2Ac(oyl-L-Ala-gamma-D-Glu-L-Lys-D-Ala-D-Ala)](n)-di-trans,octa-cis-undecaprenyl diphosphate + beta-D-GlcNAc-(1-&gt;4)-Mur2Ac(oyl-L-Ala-gamma-D-Glu-L-Lys-D-Ala-D-Ala)-di-trans,octa-cis-undecaprenyl diphosphate = [GlcNAc-(1-&gt;4)-Mur2Ac(oyl-L-Ala-gamma-D-Glu-L-Lys-D-Ala-D-Ala)](n+1)-di-trans,octa-cis-undecaprenyl diphosphate + di-trans,octa-cis-undecaprenyl diphosphate + H(+). Its pathway is cell wall biogenesis; peptidoglycan biosynthesis. Functionally, peptidoglycan polymerase that catalyzes glycan chain elongation from lipid-linked precursors. In Salmonella newport (strain SL254), this protein is Biosynthetic peptidoglycan transglycosylase.